The sequence spans 413 residues: CinA-like protein (413 aa).

This sequence belongs to the CinA family.

This Crocosphaera subtropica (strain ATCC 51142 / BH68) (Cyanothece sp. (strain ATCC 51142)) protein is CinA-like protein.